A 143-amino-acid polypeptide reads, in one-letter code: Aspartate 1-decarboxylase (143 aa).

Serine 25 functions as the Schiff-base intermediate with substrate; via pyruvic acid in the catalytic mechanism. Serine 25 carries the pyruvic acid (Ser) modification. A substrate-binding site is contributed by threonine 57. Tyrosine 58 serves as the catalytic Proton donor. 73 to 75 is a substrate binding site; that stretch reads GAA.

It belongs to the PanD family. Heterooctamer of four alpha and four beta subunits. It depends on pyruvate as a cofactor. In terms of processing, is synthesized initially as an inactive proenzyme, which is activated by self-cleavage at a specific serine bond to produce a beta-subunit with a hydroxyl group at its C-terminus and an alpha-subunit with a pyruvoyl group at its N-terminus.

The protein resides in the cytoplasm. The enzyme catalyses L-aspartate + H(+) = beta-alanine + CO2. It functions in the pathway cofactor biosynthesis; (R)-pantothenate biosynthesis; beta-alanine from L-aspartate: step 1/1. Its function is as follows. Catalyzes the pyruvoyl-dependent decarboxylation of aspartate to produce beta-alanine. The sequence is that of Aspartate 1-decarboxylase from Mycobacterium ulcerans (strain Agy99).